The following is a 404-amino-acid chain: 2,3-bisphosphoglycerate-independent phosphoglycerate mutase (404 aa).

The segment at 155 to 183 (LSDMIGDSDPHREGLPPEKIRPTDPSGDR) is disordered. Basic and acidic residues predominate over residues 162–183 (SDPHREGLPPEKIRPTDPSGDR).

The protein belongs to the BPG-independent phosphoglycerate mutase family. A-PGAM subfamily.

The enzyme catalyses (2R)-2-phosphoglycerate = (2R)-3-phosphoglycerate. It functions in the pathway carbohydrate degradation; glycolysis; pyruvate from D-glyceraldehyde 3-phosphate: step 3/5. Functionally, catalyzes the interconversion of 2-phosphoglycerate and 3-phosphoglycerate. The sequence is that of 2,3-bisphosphoglycerate-independent phosphoglycerate mutase from Thermoplasma acidophilum (strain ATCC 25905 / DSM 1728 / JCM 9062 / NBRC 15155 / AMRC-C165).